A 276-amino-acid polypeptide reads, in one-letter code: Type II pantothenate kinase (276 aa).

8–15 (DAGGTLTK) contributes to the ATP binding site. The active-site Proton acceptor is the E76. ATP is bound by residues T105, 127-131 (GGTIM), F143, and S230.

Belongs to the type II pantothenate kinase family. In terms of assembly, homodimer.

It localises to the cytoplasm. It carries out the reaction (R)-pantothenate + ATP = (R)-4'-phosphopantothenate + ADP + H(+). The protein operates within cofactor biosynthesis; coenzyme A biosynthesis; CoA from (R)-pantothenate: step 1/5. Its function is as follows. Catalyzes the phosphorylation of pantothenate (Pan), the first step in CoA biosynthesis. This chain is Type II pantothenate kinase, found in Bacillus cereus (strain ATCC 10987 / NRS 248).